Consider the following 230-residue polypeptide: SPbeta prophage-derived putative HNH endonuclease YoqL (230 aa).

The HNH domain occupies 136–188 (CSYCGLKIEDHKILFKGTYIQSDFHKEHVDHKGANDISNCIPACKSCNSSKHD).

This sequence belongs to the HNH nuclease family.

This chain is SPbeta prophage-derived putative HNH endonuclease YoqL (yoqL), found in Bacillus subtilis (strain 168).